Here is a 648-residue protein sequence, read N- to C-terminus: Biosynthetic arginine decarboxylase (648 aa).

Position 109 is an N6-(pyridoxal phosphate)lysine (K109). A substrate-binding site is contributed by 291–301 (IDVGGGLGIDF).

It belongs to the Orn/Lys/Arg decarboxylase class-II family. SpeA subfamily. Mg(2+) is required as a cofactor. It depends on pyridoxal 5'-phosphate as a cofactor.

It catalyses the reaction L-arginine + H(+) = agmatine + CO2. It participates in amine and polyamine biosynthesis; agmatine biosynthesis; agmatine from L-arginine: step 1/1. In terms of biological role, catalyzes the biosynthesis of agmatine from arginine. This Prochlorococcus marinus (strain MIT 9312) protein is Biosynthetic arginine decarboxylase.